The chain runs to 256 residues: 2-aminoethanethiol dioxygenase (256 aa).

Residues H100, H102, and H179 each coordinate Fe cation.

As to quaternary structure, monomer. Fe cation is required as a cofactor. As to expression, ubiquitous, with highest expression in brain, heart and skeletal muscle (at protein level).

It carries out the reaction cysteamine + O2 = hypotaurine + H(+). It catalyses the reaction N-terminal L-cysteinyl-[protein] + O2 = N-terminal S-hydroxy-S-oxy-L-cysteinyl-[protein] + H(+). Its function is as follows. Plays a vital role in regulating thiol metabolism and preserving oxygen homeostasis by oxidizing the sulfur of cysteamine and N-terminal cysteine-containing proteins to their corresponding sulfinic acids using O2 as a cosubstrate. Catalyzes the oxidation of cysteamine (2-aminoethanethiol) to hypotaurine. Catalyzes the oxidation of the regulator of G-protein signaling 5 (RGS5). Also oxidizes proteins RGS4 and interleukin-32 (IL32). This chain is 2-aminoethanethiol dioxygenase (Ado), found in Mus musculus (Mouse).